Consider the following 257-residue polypeptide: Ribonuclease PH (257 aa).

Phosphate-binding positions include Arg87 and 125–127 (GTR).

The protein belongs to the RNase PH family. Homohexameric ring arranged as a trimer of dimers.

The enzyme catalyses tRNA(n+1) + phosphate = tRNA(n) + a ribonucleoside 5'-diphosphate. Functionally, phosphorolytic 3'-5' exoribonuclease that plays an important role in tRNA 3'-end maturation. Removes nucleotide residues following the 3'-CCA terminus of tRNAs; can also add nucleotides to the ends of RNA molecules by using nucleoside diphosphates as substrates, but this may not be physiologically important. Probably plays a role in initiation of 16S rRNA degradation (leading to ribosome degradation) during starvation. The protein is Ribonuclease PH of Geobacillus kaustophilus (strain HTA426).